The primary structure comprises 356 residues: Tyrosine recombinase XerS (356 aa).

One can recognise a Core-binding (CB) domain in the interval 16–121 (IMPWYVLDYY…ALSSLYKYLT (106 aa)). In terms of domain architecture, Tyr recombinase spans 169-354 (AFLDYVDKEY…VNDEQKNALD (186 aa)). Residues arginine 210, lysine 234, histidine 306, arginine 309, and histidine 332 contribute to the active site. Tyrosine 341 serves as the catalytic O-(3'-phospho-DNA)-tyrosine intermediate.

Belongs to the 'phage' integrase family. XerS subfamily.

It localises to the cytoplasm. Its activity is regulated as follows. FtsK is required for recombination. Functionally, site-specific tyrosine recombinase, which acts by catalyzing the cutting and rejoining of the recombining DNA molecules. Essential to convert dimers of the bacterial chromosome into monomers to permit their segregation at cell division. The sequence is that of Tyrosine recombinase XerS from Streptococcus pyogenes serotype M2 (strain MGAS10270).